Reading from the N-terminus, the 600-residue chain is MPGDRGALSSPAASSGSPSAAPSGIAACPPPPSPLARASPQASGPRRGASVPQKLAETLSSQYGLNVFVAGLLFLLAWAVHATGVGKSDLLCVLTALMLLQLLWMLWYVGRSYMQRRLIRPKDTHAGARWLRGSITLFAFITIVLGCLKVAYFIGFSECLSATEGVFPVTHAVHTLLQVYFLWGHAKDIIMSFKTLERFGVIHSVFTNLLLWANSVLNESKHQLNEHKERLITLGFGNITIVLDDHTPQCNCTPPALCSALSHGIYYLYPFNIEYQILASTMLYVLWKNIGRRVDSSRHQKMQCRFDGVLVGSVLGLTVLAATIAVVVVYMIHIGRSKSKSESALIMFYLYAITVLLLMGAAGLVGSWIYRVDEKSLDESKNPARKLDADLLVATASGSWLLSWGSILAIACAETRPPYTWYNLPYSVLVIVEKYVQNIFIIESVHLEPEGVPEDVRTLRVVTVCSGEAAALAASSLGSQGTAQDGSPAVNGNLHLQQRCEKEDQEADWEGATGTTRCLDFLQGGMKRRLLRNITAFLFLCNISLWIPPAFGCRPEYDNGLEEIVFGFEPWIIVVNLAMPFSIFYRMHAAAALFEVYCKI.

Residues 1–50 (MPGDRGALSSPAASSGSPSAAPSGIAACPPPPSPLARASPQASGPRRGAS) are disordered. Residues 1-56 (MPGDRGALSSPAASSGSPSAAPSGIAACPPPPSPLARASPQASGPRRGASVPQKLA) lie on the Cytoplasmic side of the membrane. Residues 7 to 27 (ALSSPAASSGSPSAAPSGIAA) show a composition bias toward low complexity. Residues 57–78 (ETLSSQYGLNVFVAGLLFLLAW) traverse the membrane as a helical segment. Residues 79-86 (AVHATGVG) are Extracellular-facing. Residues 87 to 110 (KSDLLCVLTALMLLQLLWMLWYVG) traverse the membrane as a helical segment. Residues 111–128 (RSYMQRRLIRPKDTHAGA) lie on the Cytoplasmic side of the membrane. A helical membrane pass occupies residues 129–151 (RWLRGSITLFAFITIVLGCLKVA). The Extracellular portion of the chain corresponds to 152–161 (YFIGFSECLS). The helical transmembrane segment at 162–186 (ATEGVFPVTHAVHTLLQVYFLWGHA) threads the bilayer. Residues 187-194 (KDIIMSFK) are Cytoplasmic-facing. A helical membrane pass occupies residues 195–221 (TLERFGVIHSVFTNLLLWANSVLNESK). At 222–262 (HQLNEHKERLITLGFGNITIVLDDHTPQCNCTPPALCSALS) the chain is on the extracellular side. A helical transmembrane segment spans residues 263–288 (HGIYYLYPFNIEYQILASTMLYVLWK). Residues 289–309 (NIGRRVDSSRHQKMQCRFDGV) are Cytoplasmic-facing. Residues 310-332 (LVGSVLGLTVLAATIAVVVVYMI) form a helical membrane-spanning segment. Over 333–342 (HIGRSKSKSE) the chain is Extracellular. Residues 343–368 (SALIMFYLYAITVLLLMGAAGLVGSW) traverse the membrane as a helical segment. Residues 369–386 (IYRVDEKSLDESKNPARK) lie on the Cytoplasmic side of the membrane. Residues 387-411 (LDADLLVATASGSWLLSWGSILAIA) form a helical membrane-spanning segment. The Extracellular segment spans residues 412–421 (CAETRPPYTW). The helical transmembrane segment at 422–442 (YNLPYSVLVIVEKYVQNIFII) threads the bilayer. At 443–532 (ESVHLEPEGV…QGGMKRRLLR (90 aa)) the chain is on the cytoplasmic side. A helical transmembrane segment spans residues 533 to 551 (NITAFLFLCNISLWIPPAF). Topologically, residues 552 to 569 (GCRPEYDNGLEEIVFGFE) are extracellular. Residues 570 to 593 (PWIIVVNLAMPFSIFYRMHAAAAL) traverse the membrane as a helical segment. At 594 to 600 (FEVYCKI) the chain is on the cytoplasmic side.

It belongs to the otopetrin family. As to quaternary structure, homodimer. Interacts with STAT1, independently of STAT1 phosphorylation status.

Its subcellular location is the cell membrane. The protein resides in the cell projection. The protein localises to the microvillus. It carries out the reaction H(+)(in) = H(+)(out). Its activity is regulated as follows. Activated by both acid and alkali, with proton influx in response to extracellular acid and proton efflux during alkali stimulation. Inhibited by Zn(2+); this inhibition is thought to be pH-sensitive. Currents evoked in response to mild acid (pH 6.0) stimulus may also be mildly potentiated by exposure to Zn(2+). Activated by NH(4)Cl. In terms of biological role, proton-selective ion channel. Biphasically modulated by acid and alkali, mediating proton influx and efflux in response to extracellular acid and base stimulation, respectively. Sour taste receptor, which carries inward currents in response to extracellular acidification. Sensor for ammonium chloride (NH(4)Cl) in taste receptor cells. NH(4)Cl acts by increasing the intracellular pH, thereby generating a driving force for proton entry through OTOP1 channel. Might also participate in alkaline sensation. Plays a role in the regulation of Ca(2+) flux in response to purigenic (ATP, ADP and UDP) stimuli, leading to increase in cytosolic Ca(2+) due to influx of extracellular calcium. May play this role by inhibiting P2Y purinoceptor-mediated Ca(2+) release in a Ca(2+)-dependent manner and promote an influx of Ca(2+) in response to ATP. Through this mechanism and possibly others, plays a role in the formation and function of calcium carbonate-based structures in the vestibular system of the inner ear, called otoconia, that sense gravity and linear acceleration. In obesity, may attenuate adipose tissue inflammation, through the negative regulation of IFNG signaling, hence may play an adaptive role in the maintainance of metabolic homeostasis. Following alkali activation, may also be permeable Na(+), K(+), Cs(+) and Li(+). The polypeptide is Proton channel OTOP1 (Rattus norvegicus (Rat)).